Here is a 688-residue protein sequence, read N- to C-terminus: MAPSWWGRSGGGGVGNGGGTPVVVKMENPNWSISEVEAAEVAPGSPAGAGKAGRGKNARQITWVLLLKAHRAAGRLTGAASAALAVASAARRRVASGRTDADAAPGESTALRARSYGCIRVSLVLSLLLLAVEVAAYLQGWHLEEVASLLAVDGLFAASYAGWMRLRLDYLAPPLQFLTNACVALFMVQSIDRLVLCLGCFWIRFKGIKPVPQAAAAGKPDVEAGAGDYPMVLVQMPMCNEREVYQQSIGAVCNLDWPKSNFLVQVLDDSDDATTSALIKEEVEKWQREGVRIIYRHRVIRDGYKAGNLKSAMNCSYVKDYEFVVIFDADFQPQADFLKRTVPHFKGKDDVGLVQARWSFVNKDENLLTRLQNVNLCFHFEVEQQVNGAFLNFFGFNGTAGVWRIKALEDSGGWMERTTVEDMDIAVRAHLKGWKFVFLNDVECQCELPESYEAYRKQQHRWHSGPMQLFRLCFVDIIKSKIGFWKKFNLIFLFFLLRKLILPFYSFTLFCVILPMTMFVPEAELPAWVVCYIPATMSILNILPAPKSFPFIVPYLLFENTMSVTKFNAMISGLFQLGSAYEWVVTKKSGRSSEGDLVGLVEKHSKQQRVGSAPNLDALTKEESNPKKDSKKKKHNRIYRKELALSFLLLTAAARSLLSAQGIHFYFLLFQGVSFLVVGLDLIGEQVE.

The segment at 1–25 is disordered; that stretch reads MAPSWWGRSGGGGVGNGGGTPVVVK. A compositionally biased stretch (gly residues) spans 8-20; it reads RSGGGGVGNGGGT. Transmembrane regions (helical) follow at residues 121-141 and 183-203; these read VSLV…LQGW and VALF…CFWI. D269 is a catalytic residue. The substrate site is built by D328 and D330. Residue D422 is part of the active site. Transmembrane regions (helical) follow at residues 500 to 520 and 525 to 545; these read LILP…TMFV and LPAW…ILPA. Residues 604-635 are disordered; that stretch reads HSKQQRVGSAPNLDALTKEESNPKKDSKKKKH. Basic and acidic residues predominate over residues 619 to 628; that stretch reads LTKEESNPKK. Transmembrane regions (helical) follow at residues 638–657 and 663–683; these read IYRK…ARSL and IHFY…LDLI.

The protein belongs to the glycosyltransferase 2 family. Plant cellulose synthase-like C subfamily.

The protein resides in the golgi apparatus membrane. Functionally, probable beta-1,4-glucan synthase rather involved in the synthesis of the xyloglucan backbone than cellulose. Seems to work simultaneously with xyloglucan 6-xylosyltransferase. Xyloglucan is a noncellulosic polysaccharides of plant cell wall and consists of a glucan backbone substituted by xylose, galactose and fucose. The chain is Probable xyloglucan glycosyltransferase 7 (CSLC7) from Oryza sativa subsp. japonica (Rice).